The chain runs to 377 residues: Nitric oxide reductase FlRd-NAD(+) reductase (377 aa).

The protein belongs to the FAD-dependent oxidoreductase family. It depends on FAD as a cofactor.

It is found in the cytoplasm. It carries out the reaction 2 reduced [nitric oxide reductase rubredoxin domain] + NAD(+) + H(+) = 2 oxidized [nitric oxide reductase rubredoxin domain] + NADH. It participates in nitrogen metabolism; nitric oxide reduction. Its function is as follows. One of at least two accessory proteins for anaerobic nitric oxide (NO) reductase. Reduces the rubredoxin moiety of NO reductase. The protein is Nitric oxide reductase FlRd-NAD(+) reductase of Escherichia coli O139:H28 (strain E24377A / ETEC).